The primary structure comprises 347 residues: NADH-ubiquinone oxidoreductase chain 2 (347 aa).

The next 10 helical transmembrane spans lie at 13-33, 59-79, 96-116, 122-142, 149-169, 178-198, 201-221, 247-267, 274-294, and 323-343; these read IILG…WIGF, YFLT…TNLL, AVMT…FWVP, IPLS…LSVL, VSPT…GWGG, ILAY…AYNP, TLLN…LFMF, IMLS…WMII, ESLL…YFYM, and VPLL…APAL.

The protein belongs to the complex I subunit 2 family. In terms of assembly, core subunit of respiratory chain NADH dehydrogenase (Complex I) which is composed of 45 different subunits. Interacts with TMEM242.

It is found in the mitochondrion inner membrane. It catalyses the reaction a ubiquinone + NADH + 5 H(+)(in) = a ubiquinol + NAD(+) + 4 H(+)(out). Core subunit of the mitochondrial membrane respiratory chain NADH dehydrogenase (Complex I) which catalyzes electron transfer from NADH through the respiratory chain, using ubiquinone as an electron acceptor. Essential for the catalytic activity and assembly of complex I. This chain is NADH-ubiquinone oxidoreductase chain 2, found in Megaderma spasma (Lesser false vampire bat).